A 340-amino-acid chain; its full sequence is UDP-N-acetylenolpyruvoylglucosamine reductase (340 aa).

The region spanning 11–181 (ISVKAKKIIS…VAIGLKLKKK (171 aa)) is the FAD-binding PCMH-type domain. R156 is a catalytic residue. Residue S227 is the Proton donor of the active site. E323 is an active-site residue.

This sequence belongs to the MurB family. FAD serves as cofactor.

It is found in the cytoplasm. The enzyme catalyses UDP-N-acetyl-alpha-D-muramate + NADP(+) = UDP-N-acetyl-3-O-(1-carboxyvinyl)-alpha-D-glucosamine + NADPH + H(+). It participates in cell wall biogenesis; peptidoglycan biosynthesis. Cell wall formation. The protein is UDP-N-acetylenolpyruvoylglucosamine reductase of Wigglesworthia glossinidia brevipalpis.